A 264-amino-acid polypeptide reads, in one-letter code: Neuferricin (264 aa).

Residues 1-22 form the signal peptide; the sequence is MLRCGGRGLLLGLAVAAAAVMA. The region spanning 35 to 134 is the Cytochrome b5 heme-binding domain; the sequence is FRLFIPEELS…KNYVCVGRVT (100 aa).

It belongs to the cytochrome b5 family. MAPR subfamily.

The protein resides in the secreted. Functionally, heme-binding protein which promotes neuronal but not astrocyte differentiation. The protein is Neuferricin of Homo sapiens (Human).